The following is a 307-amino-acid chain: MASLFGDDGVDDLFNDNIPTDPDQLPSDGEGEKLFADDEDNGVEPGSQDAQIVEPKKRAVRNPRPRLTVETLRGPRGIQTIEDYFKDIKFKGKGYEKTDLDEVLRRLQHWGHRMYPTYTFDDVLNNIERLGKKKPLQVHMARYRLGQLEQMRAHEAEALEEAQDEQQEGAGDEPFDEFDALLGEQIAMSRLAPPSPQQWKMSTASSNSTLATPSFSRGNAVMSTPYSGVNATFDRSGASVAPAFDRNGAPLASMDISDYGQPLPPSQPPTPAAKKLSNEQMARIAENRRLAQERLKAKQQQESGSKS.

Disordered regions lie at residues 1–50 (MASL…SQDA) and 252–279 (ASMD…LSNE). Over residues 262–271 (PLPPSQPPTP) the composition is skewed to pro residues.

The protein belongs to the CSM3 family.

It is found in the cytoplasm. The protein resides in the nucleus. Functionally, required for normal progression of S-phase. Important for cell survival after DNA damage or replication stress. In Drosophila melanogaster (Fruit fly), this protein is Protein TIPIN homolog.